A 104-amino-acid polypeptide reads, in one-letter code: Replication restart protein PriB (104 aa).

The SSB domain maps to 1–101 (MTNRLALSGT…LHAEQIELID (101 aa)).

This sequence belongs to the PriB family. Homodimer. Interacts with PriA and DnaT. Component of the replication restart primosome. Primosome assembly occurs via a 'hand-off' mechanism. PriA binds to replication forks, subsequently PriB then DnaT bind; DnaT then displaces ssDNA to generate the helicase loading substrate.

In terms of biological role, involved in the restart of stalled replication forks, which reloads the replicative helicase on sites other than the origin of replication; the PriA-PriB pathway is the major replication restart pathway. During primosome assembly it facilitates complex formation between PriA and DnaT on DNA; stabilizes PriA on DNA. Stimulates the DNA unwinding activity of PriA helicase. This chain is Replication restart protein PriB, found in Citrobacter koseri (strain ATCC BAA-895 / CDC 4225-83 / SGSC4696).